The sequence spans 589 residues: Guanylate-binding protein 2 (589 aa).

The segment at 1–309 (MASEIHMLQP…GAISSGSLPC (309 aa)) is GTPase domain (Globular). The region spanning 35–276 (NQPVVVVAIV…FTSYIFSYSA (242 aa)) is the GB1/RHD3-type G domain. Residues 45–52 (GLYRTGKS), 181–182 (RD), and leucine 245 contribute to the GTP site. Cysteine 586 is subject to Cysteine methyl ester. Residue cysteine 586 is the site of S-geranylgeranyl cysteine attachment. Positions 587–589 (TIL) are cleaved as a propeptide — removed in mature form.

It belongs to the TRAFAC class dynamin-like GTPase superfamily. GB1/RHD3 GTPase family. GB1 subfamily. Homodimer; homodimerization occurs upon GTP-binding and is required for the association with membranous structures. Heterodimer with other family members, including GBP1, GBP3, GBP4 and GBP5. In terms of processing, isoprenylation is required for proper subcellular location. Widely expressed.

Its subcellular location is the cytoplasmic vesicle membrane. The protein localises to the golgi apparatus membrane. It is found in the cytoplasm. The protein resides in the perinuclear region. The catalysed reaction is GTP + H2O = GDP + phosphate + H(+). Its function is as follows. Interferon (IFN)-inducible GTPase that plays important roles in innate immunity against a diverse range of bacterial, viral and protozoan pathogens. Hydrolyzes GTP to GMP in 2 consecutive cleavage reactions, but the major reaction product is GDP. Following infection, recruited to the pathogen-containing vacuoles or vacuole-escaped bacteria and acts as a positive regulator of inflammasome assembly by promoting the release of inflammasome ligands from bacteria. Acts by promoting lysis of pathogen-containing vacuoles, releasing pathogens into the cytosol. Following pathogen release in the cytosol, promotes recruitment of proteins that mediate bacterial cytolysis: this liberates ligands that are detected by inflammasomes, such as lipopolysaccharide (LPS) that activates the non-canonical CASP4/CASP11 inflammasome or double-stranded DNA (dsDNA) that activates the AIM2 inflammasome. Confers protection to the protozoan pathogen Toxoplasma gondii. Independently of its GTPase activity, acts as an inhibitor of various viruses infectivity by inhibiting FURIN-mediated maturation of viral envelope proteins. The polypeptide is Guanylate-binding protein 2 (Gbp2) (Rattus norvegicus (Rat)).